Here is a 400-residue protein sequence, read N- to C-terminus: Queuine tRNA-ribosyltransferase catalytic subunit (400 aa).

The active-site Proton acceptor is the D89. Residues 89–93 (DSGGF), D143, Q185, and G212 each bind substrate. The RNA binding stretch occupies residues 243–249 (GVGFPVD). The active-site Nucleophile is the D262. Residues 267 to 271 (TRTAR) are RNA binding; important for wobble base 34 recognition. Residues C301, C303, C306, and H331 each coordinate Zn(2+).

The protein belongs to the queuine tRNA-ribosyltransferase family. In terms of assembly, heterodimer of a catalytic subunit and an accessory subunit. Requires Zn(2+) as cofactor.

It is found in the cytoplasm. The catalysed reaction is guanosine(34) in tRNA + queuine = queuosine(34) in tRNA + guanine. Catalytic subunit of the queuine tRNA-ribosyltransferase (TGT) that catalyzes the base-exchange of a guanine (G) residue with queuine (Q) at position 34 (anticodon wobble position) in tRNAs with GU(N) anticodons (tRNA-Asp, -Asn, -His and -Tyr), resulting in the hypermodified nucleoside queuosine (7-(((4,5-cis-dihydroxy-2-cyclopenten-1-yl)amino)methyl)-7-deazaguanosine). Catalysis occurs through a double-displacement mechanism. The nucleophile active site attacks the C1' of nucleotide 34 to detach the guanine base from the RNA, forming a covalent enzyme-RNA intermediate. The proton acceptor active site deprotonates the incoming queuine, allowing a nucleophilic attack on the C1' of the ribose to form the product. In Caenorhabditis briggsae, this protein is Queuine tRNA-ribosyltransferase catalytic subunit.